Reading from the N-terminus, the 248-residue chain is 2-acetamido-2-deoxy-D-galactose-binding seed lectin 2 (248 aa).

Residue Asn-119 is glycosylated (N-linked (GlcNAc...) asparagine; partial). Residues Glu-128 and Asp-130 each coordinate Mn(2+). Ca(2+) contacts are provided by Asp-130, Tyr-132, Asn-134, and Asp-138. Positions 138 and 144 each coordinate Mn(2+).

It belongs to the leguminous lectin family.

The protein is 2-acetamido-2-deoxy-D-galactose-binding seed lectin 2 of Cytisus scoparius (Scotch broom).